The following is a 422-amino-acid chain: MDFLEIVGQVPLKGGVEISGAKNSALPILAATLLSQQEVKIKSLPQVVDIKAMALLLQNLGASLEWLDPNTLQISAKSLHHTEATYDLVRKMRASILVLGPLLARFKECLVSLPGGCAIGARPVDLHLKAMQQLGAEIKIEQGYIHAKAPKGLKGNDILFDKISVTGTENALMAASLAKGITRIINAAKEPEITQLCAFLQSGGVEIEGVGSSELKIRGVENDALNLKDIQIIPDRIEAGTYLCVGAITNSQLKINRIIPNHLQAITDKLIEIGFSLDIQENSIEIYPAQKRQAFEITTKEYPGFPTDMQAQFMALATQCLGTSVIEETLFENRFMHASELQRLGANISLKTNIATISGSTELTGSDVMATDLRASSALILAALVAKGVSRVHRIYHLDRGYERLEDKINALGAKVARLKEK.

22 to 23 lines the phosphoenolpyruvate pocket; it reads KN. Residue R93 coordinates UDP-N-acetyl-alpha-D-glucosamine. The Proton donor role is filled by C117. At C117 the chain carries 2-(S-cysteinyl)pyruvic acid O-phosphothioketal. UDP-N-acetyl-alpha-D-glucosamine-binding positions include 122-126, D308, and L330; that span reads RPVDL.

Belongs to the EPSP synthase family. MurA subfamily.

It is found in the cytoplasm. The enzyme catalyses phosphoenolpyruvate + UDP-N-acetyl-alpha-D-glucosamine = UDP-N-acetyl-3-O-(1-carboxyvinyl)-alpha-D-glucosamine + phosphate. It participates in cell wall biogenesis; peptidoglycan biosynthesis. Its function is as follows. Cell wall formation. Adds enolpyruvyl to UDP-N-acetylglucosamine. The chain is UDP-N-acetylglucosamine 1-carboxyvinyltransferase from Helicobacter pylori (strain Shi470).